The chain runs to 178 residues: SCAN domain-containing protein 1 (178 aa).

A disordered region spans residues 1–107 (MAATEQSLAP…GSRPGPETFR (107 aa)). Low complexity predominate over residues 9–18 (APAGSSAPPS). A compositionally biased stretch (polar residues) spans 36-54 (GSSSTPEAPSIPDSSNPSA). The SCAN box domain maps to 107–178 (RQRFRQFRYQ…RRRTDVRITG (72 aa)).

Interacts with ZNF202.

It is found in the nucleus. Its function is as follows. May regulate transcriptional activity. The sequence is that of SCAN domain-containing protein 1 (SCAND1) from Bos taurus (Bovine).